Consider the following 133-residue polypeptide: Large ribosomal subunit protein uL15 (133 aa).

Positions 1 to 62 (MALHNLQPAP…GQQPLQRRLP (62 aa)) are disordered. Over residues 32–45 (TRGQKGQKSRTGYS) the composition is skewed to polar residues.

This sequence belongs to the universal ribosomal protein uL15 family. In terms of assembly, part of the 50S ribosomal subunit.

In terms of biological role, binds to the 23S rRNA. The sequence is that of Large ribosomal subunit protein uL15 from Nitratiruptor sp. (strain SB155-2).